Reading from the N-terminus, the 139-residue chain is Large ribosomal subunit protein uL22 (139 aa).

Positions 1–21 (MTAPEQTYRNKKQRKQQHKLR) are disordered. A compositionally biased stretch (basic residues) spans 9–21 (RNKKQRKQQHKLR).

The protein belongs to the universal ribosomal protein uL22 family. As to quaternary structure, part of the 50S ribosomal subunit.

Its function is as follows. This protein binds specifically to 23S rRNA; its binding is stimulated by other ribosomal proteins, e.g. L4, L17, and L20. It is important during the early stages of 50S assembly. It makes multiple contacts with different domains of the 23S rRNA in the assembled 50S subunit and ribosome. Functionally, the globular domain of the protein is located near the polypeptide exit tunnel on the outside of the subunit, while an extended beta-hairpin is found that lines the wall of the exit tunnel in the center of the 70S ribosome. This is Large ribosomal subunit protein uL22 from Deinococcus geothermalis (strain DSM 11300 / CIP 105573 / AG-3a).